The following is a 162-amino-acid chain: Ribosome maturation factor RimP (162 aa).

Belongs to the RimP family.

It localises to the cytoplasm. Functionally, required for maturation of 30S ribosomal subunits. The polypeptide is Ribosome maturation factor RimP (Leptospira biflexa serovar Patoc (strain Patoc 1 / Ames)).